The sequence spans 460 residues: Cysteine--tRNA ligase (460 aa).

Position 28 (cysteine 28) interacts with Zn(2+). The 'HIGH' region signature appears at 30–40; it reads MTVYDYCHLGH. Zn(2+) is bound by residues cysteine 209, histidine 234, and glutamate 238. Residues 266–270 carry the 'KMSKS' region motif; the sequence is KMSKS. Lysine 269 is a binding site for ATP.

It belongs to the class-I aminoacyl-tRNA synthetase family. As to quaternary structure, monomer. Zn(2+) is required as a cofactor.

It localises to the cytoplasm. The catalysed reaction is tRNA(Cys) + L-cysteine + ATP = L-cysteinyl-tRNA(Cys) + AMP + diphosphate. This is Cysteine--tRNA ligase from Pseudomonas putida (strain W619).